We begin with the raw amino-acid sequence, 304 residues long: Protease HtpX homolog (304 aa).

Transmembrane regions (helical) follow at residues 14 to 34 (IFII…IGII) and 39 to 59 (YLNG…IMVM). Residue His-144 coordinates Zn(2+). Glu-145 is a catalytic residue. His-148 is a Zn(2+) binding site. 2 helical membrane-spanning segments follow: residues 159-179 (IAIA…RMIF) and 202-222 (AIIY…ATAI). Glu-231 contributes to the Zn(2+) binding site.

The protein belongs to the peptidase M48B family. Zn(2+) is required as a cofactor.

It localises to the cell membrane. This is Protease HtpX homolog from Listeria monocytogenes serotype 4b (strain CLIP80459).